The primary structure comprises 487 residues: UDP-glycosyltransferase 72E1 (487 aa).

The active-site Proton acceptor is histidine 18. Histidine 18 provides a ligand contact to an anthocyanidin. Residue aspartate 116 is the Charge relay of the active site. 7 residues coordinate UDP-alpha-D-glucose: alanine 351, glutamine 353, histidine 368, tryptophan 371, asparagine 372, serine 373, and glutamate 376. Position 391 (alanine 391) interacts with an anthocyanidin. 2 residues coordinate UDP-alpha-D-glucose: glutamate 392 and glutamine 393.

The protein belongs to the UDP-glycosyltransferase family. In terms of assembly, interacts with SIS8. In terms of tissue distribution, expressed in seedlings, roots and leaves.

Its subcellular location is the nucleus. The enzyme catalyses (E)-coniferaldehyde + UDP-alpha-D-glucose = 4-O-(beta-D-glucosyl)-4-(E)-coniferyl aldehyde + UDP + H(+). It carries out the reaction (E)-sinapaldehyde + UDP-alpha-D-glucose = 4-O-(beta-D-glucosyl)-4-trans-sinapoyl aldehyde + UDP + H(+). In terms of biological role, UDP-glycosyltransferase that glucosylates coniferyl aldehyde to form coniferyl aldehyde 4-O-glucoside. Glucosylates sinapyl aldehyde to form sinapyl aldehyde 4-O-glucoside. Is not active in presence of coniferyl alcohol or sinapyl alcohol. Can glucosylate the phytotoxic xenobiotic compound 2,4,5-trichlorophenol (TCP). In Arabidopsis thaliana (Mouse-ear cress), this protein is UDP-glycosyltransferase 72E1.